A 2542-amino-acid chain; its full sequence is Probable polyketide synthase 41 (2542 aa).

Residues 11–441 enclose the Ketosynthase family 3 (KS3) domain; sequence CNKVAIIGIG…GSNCCLIVSS (431 aa). Catalysis depends on for beta-ketoacyl synthase activity residues Cys-177, His-318, and His-360. Positions 628–661 are acyl/malonyl transferase; sequence GIKPSIIVGHSLGEISSSYCSGMIDLDTFCYLIY. The For acyl/malonyl transferase activity role is filled by Ser-638. Residues 926–1059 form an N-terminal hotdog fold region; that stretch reads INHLGISNSN…ANFQLFSRGP (134 aa). One can recognise a PKS/mFAS DH domain in the interval 926-1231; sequence INHLGISNSN…FKSTTKIKDP (306 aa). His-959 (proton acceptor; for dehydratase activity) is an active-site residue. The segment at 1083-1231 is C-terminal hotdog fold; it reads NLTKLSKQEL…FKSTTKIKDP (149 aa). Asp-1145 functions as the Proton donor; for dehydratase activity in the catalytic mechanism. One can recognise a Carrier domain in the interval 2459 to 2537; sequence NVELTVDQLI…SFIQLVKNSM (79 aa). At Ser-2496 the chain carries O-(pantetheine 4'-phosphoryl)serine.

Pantetheine 4'-phosphate is required as a cofactor.

Functionally, probable polyketide synthase. The protein is Probable polyketide synthase 41 (pks41) of Dictyostelium discoideum (Social amoeba).